A 358-amino-acid chain; its full sequence is Protein-arginine kinase (358 aa).

In terms of domain architecture, Phosphagen kinase C-terminal spans 23–250 (VWPVTTFSLA…SKLSVAEVAA (228 aa)). ATP-binding positions include 26–30 (VTTFS), 174–178 (KSQCF), and 203–208 (SSLLLG).

It belongs to the ATP:guanido phosphotransferase family.

The enzyme catalyses L-arginyl-[protein] + ATP = N(omega)-phospho-L-arginyl-[protein] + ADP + H(+). Functionally, catalyzes the specific phosphorylation of arginine residues in proteins. The chain is Protein-arginine kinase from Chlamydia pneumoniae (Chlamydophila pneumoniae).